The following is a 441-amino-acid chain: Ribulose bisphosphate carboxylase large chain (441 aa).

Residue Lys-5 is modified to N6,N6,N6-trimethyllysine. Substrate-binding residues include Asn-114 and Thr-164. Lys-166 serves as the catalytic Proton acceptor. Position 168 (Lys-168) interacts with substrate. The Mg(2+) site is built by Lys-192, Asp-194, and Glu-195. Lys-192 is modified (N6-carboxylysine). His-285 serves as the catalytic Proton acceptor. Arg-286, His-318, and Ser-370 together coordinate substrate.

The protein belongs to the RuBisCO large chain family. Type I subfamily. As to quaternary structure, heterohexadecamer of 8 large chains and 8 small chains; disulfide-linked. The disulfide link is formed within the large subunit homodimers. Mg(2+) is required as a cofactor. Post-translationally, the disulfide bond which can form in the large chain dimeric partners within the hexadecamer appears to be associated with oxidative stress and protein turnover.

It is found in the plastid. It localises to the chloroplast. The enzyme catalyses 2 (2R)-3-phosphoglycerate + 2 H(+) = D-ribulose 1,5-bisphosphate + CO2 + H2O. It carries out the reaction D-ribulose 1,5-bisphosphate + O2 = 2-phosphoglycolate + (2R)-3-phosphoglycerate + 2 H(+). Functionally, ruBisCO catalyzes two reactions: the carboxylation of D-ribulose 1,5-bisphosphate, the primary event in carbon dioxide fixation, as well as the oxidative fragmentation of the pentose substrate in the photorespiration process. Both reactions occur simultaneously and in competition at the same active site. This Argyrochosma delicatula (Delicate cloak fern) protein is Ribulose bisphosphate carboxylase large chain.